The primary structure comprises 529 residues: Peptide chain release factor 3 (529 aa).

The tr-type G domain occupies 11–280; the sequence is AKRRTFAIIS…GLVEWAPAPM (270 aa). GTP-binding positions include 20-27, 88-92, and 142-145; these read SHPDAGKT, DTPGH, and NKLD.

Belongs to the TRAFAC class translation factor GTPase superfamily. Classic translation factor GTPase family. PrfC subfamily.

Its subcellular location is the cytoplasm. Its function is as follows. Increases the formation of ribosomal termination complexes and stimulates activities of RF-1 and RF-2. It binds guanine nucleotides and has strong preference for UGA stop codons. It may interact directly with the ribosome. The stimulation of RF-1 and RF-2 is significantly reduced by GTP and GDP, but not by GMP. The polypeptide is Peptide chain release factor 3 (Escherichia coli O8 (strain IAI1)).